The sequence spans 537 residues: MGDEDKRITYEDSEPSTGMNYTPSMHQETQEETVMKLKGIDANEPTEGSILLKSSEKKLQETPTEANHVQRLRQMLACPPHGLLDRVVTNVTIIVLLWAVIWSITGSECLPGGNLFGIIILFYCAIIGGKLLGLIKLPTLPPLPSLLGMLLAGFLIRNIPVINDNVQIKHKWSSSLRSIALSIILVRAGLGLDSKALKKLKGVCVRLSMGPCIVEACTSALLAHYLLGLPWQWGFILGFVLGAVSPAVVVPSMLLLQGGGYGVEKGVPTLLMAAGSFDDILAITGFNTCLGIAFSTGSTVFNVLRGVLEVVIGVATGSVLGFFIQYFPSCDQDKLVCKRTFLVLGLSVLAVFSSVHFGFPGSGGLCTLVMAFLAGMGWTSEKAEVEKIIAVAWDIFQPLLFGLIGAEVSIASLRPETVGLCVATVGIAVLIRILTTFLMVCFAGFNLKEKIFISFAWLPKATVQAAIGSVALDTARSHGEKQLEDYGMDVLTVAFLSILITAPIGSLLIGLLGPRLLQKVEHQNKDEEVQGETSVQV.

Basic and acidic residues predominate over residues 1 to 10 (MGDEDKRITY). Residues 1 to 33 (MGDEDKRITYEDSEPSTGMNYTPSMHQETQEET) form a disordered region. Over 1-86 (MGDEDKRITY…ACPPHGLLDR (86 aa)) the chain is Cytoplasmic. Residues 15–27 (PSTGMNYTPSMHQ) are compositionally biased toward polar residues. A Phosphoserine modification is found at S49. A helical membrane pass occupies residues 87–104 (VVTNVTIIVLLWAVIWSI). Over 105–113 (TGSECLPGG) the chain is Extracellular. Residues 114–133 (NLFGIIILFYCAIIGGKLLG) traverse the membrane as a helical segment. Residues 134 to 144 (LIKLPTLPPLP) are Cytoplasmic-facing. The helical transmembrane segment at 145–161 (SLLGMLLAGFLIRNIPV) threads the bilayer. Residues 162–171 (INDNVQIKHK) are Extracellular-facing. Residues 172-189 (WSSSLRSIALSIILVRAG) traverse the membrane as a helical segment. The Cytoplasmic portion of the chain corresponds to 190–200 (LGLDSKALKKL). A helical membrane pass occupies residues 201–227 (KGVCVRLSMGPCIVEACTSALLAHYLL). Residues 228-233 (GLPWQW) are Extracellular-facing. Residues 234–242 (GFILGFVLG) form a helical membrane-spanning segment. Residues 243–270 (AVSPAVVVPSMLLLQGGGYGVEKGVPTL) lie on the Cytoplasmic side of the membrane. Na(+)-binding residues include V244, G275, D278, and D279. A helical membrane pass occupies residues 271-290 (LMAAGSFDDILAITGFNTCL). The Extracellular segment spans residues 291 to 300 (GIAFSTGSTV). Residues 301-324 (FNVLRGVLEVVIGVATGSVLGFFI) traverse the membrane as a helical segment. At 325–339 (QYFPSCDQDKLVCKR) the chain is on the cytoplasmic side. A helical membrane pass occupies residues 340-357 (TFLVLGLSVLAVFSSVHF). Topologically, residues 358–361 (GFPG) are extracellular. Residues 362–373 (SGGLCTLVMAFL) form a helical membrane-spanning segment. The Cytoplasmic portion of the chain corresponds to 374-390 (AGMGWTSEKAEVEKIIA). The chain crosses the membrane as a helical span at residues 391–411 (VAWDIFQPLLFGLIGAEVSIA). The Extracellular portion of the chain corresponds to 412–417 (SLRPET). A helical membrane pass occupies residues 418–440 (VGLCVATVGIAVLIRILTTFLMV). The Cytoplasmic portion of the chain corresponds to 441-461 (CFAGFNLKEKIFISFAWLPKA). Residues 462–473 (TVQAAIGSVALD) traverse the membrane as a helical segment. At 474–486 (TARSHGEKQLEDY) the chain is on the extracellular side. The chain crosses the membrane as a helical span at residues 487–509 (GMDVLTVAFLSILITAPIGSLLI). The Cytoplasmic portion of the chain corresponds to 510 to 537 (GLLGPRLLQKVEHQNKDEEVQGETSVQV).

It belongs to the monovalent cation:proton antiporter 1 (CPA1) transporter (TC 2.A.36) family. Homodimer; dimerization is essential for SLC9B2 activity. Lipids seem to play a role in the stabilization of the dimerization subdomain.

The protein resides in the cell membrane. The protein localises to the mitochondrion membrane. It is found in the endosome membrane. It localises to the recycling endosome membrane. Its subcellular location is the cytoplasmic vesicle. The protein resides in the secretory vesicle. The protein localises to the synaptic vesicle membrane. It is found in the basolateral cell membrane. It localises to the apical cell membrane. It carries out the reaction Li(+)(out) + H(+)(in) = Li(+)(in) + H(+)(out). The catalysed reaction is Li(+)(in) + Na(+)(out) = Li(+)(out) + Na(+)(in). It catalyses the reaction Na(+)(in) + H(+)(out) = Na(+)(out) + H(+)(in). Its activity is regulated as follows. Allosterically inhibited by the N-terminal domain. Inhibited by phloretin. In terms of biological role, electroneutral Na(+) Li(+)/H(+) antiporter that extrudes Na(+) or Li(+) in exchange for external protons across the membrane. Uses the proton gradient/membrane potential to extrude sodium. Contributes to the regulation of intracellular pH and sodium homeostasis. Also able to mediate Na(+)/Li(+) antiporter activity in kidney. May play a physiological role in renal tubular function and blood pressure homeostasis. Plays an important role for insulin secretion and clathrin-mediated endocytosis in beta-cells. Involved in sperm motility and fertility. It is controversial whether SLC9B2 plays a role in osteoclast differentiation or not. This chain is Sodium/hydrogen exchanger 9B2 (SLC9B2), found in Pongo abelii (Sumatran orangutan).